Reading from the N-terminus, the 351-residue chain is Histidinol-phosphate aminotransferase (351 aa).

Lys-221 is subject to N6-(pyridoxal phosphate)lysine.

The protein belongs to the class-II pyridoxal-phosphate-dependent aminotransferase family. Histidinol-phosphate aminotransferase subfamily. Homodimer. Requires pyridoxal 5'-phosphate as cofactor.

The catalysed reaction is L-histidinol phosphate + 2-oxoglutarate = 3-(imidazol-4-yl)-2-oxopropyl phosphate + L-glutamate. Its pathway is amino-acid biosynthesis; L-histidine biosynthesis; L-histidine from 5-phospho-alpha-D-ribose 1-diphosphate: step 7/9. The polypeptide is Histidinol-phosphate aminotransferase (Staphylococcus epidermidis (strain ATCC 35984 / DSM 28319 / BCRC 17069 / CCUG 31568 / BM 3577 / RP62A)).